Consider the following 128-residue polypeptide: Deoxycytidylate deaminase (128 aa).

One can recognise a CMP/dCMP-type deaminase domain in the interval 5–128 (DWDEYFLGIA…IERVVYPKES (124 aa)). His81 is a binding site for Zn(2+). The Proton donor role is filled by Glu83. Residues Cys107 and Cys110 each coordinate Zn(2+).

It belongs to the cytidine and deoxycytidylate deaminase family.

It carries out the reaction dCMP + H2O + H(+) = dUMP + NH4(+). The sequence is that of Deoxycytidylate deaminase (36.1) from Mycobacterium (Mycobacteriophage D29).